A 321-amino-acid polypeptide reads, in one-letter code: Ribonuclease Z (321 aa).

7 residues coordinate Zn(2+): His-62, His-64, Asp-66, His-67, His-139, Asp-209, and His-268. Asp-66 serves as the catalytic Proton acceptor.

Belongs to the RNase Z family. In terms of assembly, homodimer. It depends on Zn(2+) as a cofactor.

It carries out the reaction Endonucleolytic cleavage of RNA, removing extra 3' nucleotides from tRNA precursor, generating 3' termini of tRNAs. A 3'-hydroxy group is left at the tRNA terminus and a 5'-phosphoryl group is left at the trailer molecule.. In terms of biological role, zinc phosphodiesterase, which displays some tRNA 3'-processing endonuclease activity. Probably involved in tRNA maturation, by removing a 3'-trailer from precursor tRNA. In Pseudomonas putida (strain W619), this protein is Ribonuclease Z.